The chain runs to 63 residues: Large ribosomal subunit protein bL35 (63 aa).

The segment covering 1–43 (MKMRTHSGAKKRLKVLSSGKVKKKSTRMRHLNSHMSSKTKRQL) has biased composition (basic residues). Residues 1-45 (MKMRTHSGAKKRLKVLSSGKVKKKSTRMRHLNSHMSSKTKRQLGK) are disordered.

This sequence belongs to the bacterial ribosomal protein bL35 family.

The protein is Large ribosomal subunit protein bL35 of Bdellovibrio bacteriovorus (strain ATCC 15356 / DSM 50701 / NCIMB 9529 / HD100).